The primary structure comprises 516 residues: Probable cytosol aminopeptidase (516 aa).

The Mn(2+) site is built by Lys288 and Asp293. Lys300 is a catalytic residue. 3 residues coordinate Mn(2+): Asp311, Asp370, and Glu372. The active site involves Arg374.

It belongs to the peptidase M17 family. Mn(2+) serves as cofactor.

The protein resides in the cytoplasm. It catalyses the reaction Release of an N-terminal amino acid, Xaa-|-Yaa-, in which Xaa is preferably Leu, but may be other amino acids including Pro although not Arg or Lys, and Yaa may be Pro. Amino acid amides and methyl esters are also readily hydrolyzed, but rates on arylamides are exceedingly low.. The catalysed reaction is Release of an N-terminal amino acid, preferentially leucine, but not glutamic or aspartic acids.. Functionally, presumably involved in the processing and regular turnover of intracellular proteins. Catalyzes the removal of unsubstituted N-terminal amino acids from various peptides. In Cupriavidus taiwanensis (strain DSM 17343 / BCRC 17206 / CCUG 44338 / CIP 107171 / LMG 19424 / R1) (Ralstonia taiwanensis (strain LMG 19424)), this protein is Probable cytosol aminopeptidase.